The sequence spans 409 residues: LIM/homeobox protein ttx-3 (409 aa).

2 consecutive LIM zinc-binding domains span residues 108-169 (NQCC…RYQK) and 171-232 (CRKC…VRST). Disordered stretches follow at residues 245-299 (AVVA…RTSF) and 372-409 (MNPPLSSSSSGHSTDGYQLNTPPLSSEIYSPNSNYTHL). A compositionally biased stretch (pro residues) spans 247-267 (VAPPPPPPTTTTAPPPAAPEQ). A DNA-binding region (homeobox) is located at residues 292–351 (SKRMRTSFKHHQLRAMKTYFALNHNPDAKDLKQLAAKTNLTKRVLQVWFQNARAKYRREL). Polar residues predominate over residues 382–409 (GHSTDGYQLNTPPLSSEIYSPNSNYTHL).

In terms of tissue distribution, expressed in the AIA, AIN and AIY interneurons, and in the NSM neurons. Expressed also in ADL and ASI sensory neurons in 60-70% of L2 larvae. Expression is also detected in head muscles of embryos and some early larvae but not late larvae or adults.

It localises to the nucleus. Its subcellular location is the perikaryon. It is found in the cell projection. The protein resides in the axon. Transcription factor. Binds to a sequence motif, 5'-TTATTGGCTTCGTTAA-3', which may be involved in AIY interneuron function, in the regulatory elements of target genes; binding is more efficient, in vitro, together with homeobox protein ceh-10. Required for specification of the AIA and AIY interneurons and the NSM neurons. Positively regulates the expression of a number of genes including ceh-10, ceh-23, kal-1, hen-1, ser-2, unc-17 and sra-11 in AIY neurons, and cat-4, flp-4, bas-1, ptps-1 and mgl-1 in NSM neurons. In concert with WNT/beta-catenin signaling, initiates expression of homeobox ceh-10 in AIY, but not in the sister cells, SMDD motor neurons. Also acts in an autoregulatory feedback loop to maintain its own expression. Plays a role in the thermotactic response, olfactory imprinting, regulation of longevity, control of dauer formation and axon outgrowth and pathfinding. Not required for normal chemosensory behavior. This Caenorhabditis elegans protein is LIM/homeobox protein ttx-3.